The chain runs to 356 residues: Putative aminopeptidase FrvX (356 aa).

Histidine 61 and aspartate 175 together coordinate a divalent metal cation. The active-site Proton acceptor is the glutamate 205. 3 residues coordinate a divalent metal cation: glutamate 206, aspartate 228, and histidine 316.

It belongs to the peptidase M42 family. A divalent metal cation is required as a cofactor.

The protein is Putative aminopeptidase FrvX (frvX) of Escherichia coli (strain K12).